A 775-amino-acid polypeptide reads, in one-letter code: Transcription activator of gluconeogenesis HCBG_00867 (775 aa).

Positions 1–70 (MTASTQNGSP…NAKDPLRPRR (70 aa)) are disordered. Polar residues-rich tracts occupy residues 21–41 (NQES…QSPA) and 48–60 (TAES…STAA). The segment at residues 77–105 (CFACQRAHLTCGDERPCQRCIKRGLQDAC) is a DNA-binding region (zn(2)-C6 fungal-type). 4 disordered regions span residues 179–248 (TQAK…PFGA), 286–351 (GAGD…NIYN), 556–592 (NLNV…AGGG), and 649–725 (QGKE…SPKQ). Residues 195 to 217 (MQDTSINPSAFQAPSPTSTPNFD) are compositionally biased toward polar residues. Over residues 218-229 (LSSNPPNRNLSS) the composition is skewed to low complexity. 4 stretches are compositionally biased toward polar residues: residues 230 to 244 (AMTQ…QTQD), 292 to 323 (PSDS…TQSP), 334 to 351 (WNPS…NIYN), and 557 to 576 (LNVN…TPRN). Positions 657-668 (GSDGKGGGGGGD) are enriched in gly residues. A compositionally biased stretch (low complexity) spans 669 to 713 (VAATAATTSTSTSNGANSSGHANANRNNTNPKNSSPPSSSSAAAA).

Belongs to the ERT1/acuK family.

It localises to the nucleus. In terms of biological role, transcription factor which regulates nonfermentable carbon utilization. Activator of gluconeogenetic genes. This chain is Transcription activator of gluconeogenesis HCBG_00867, found in Ajellomyces capsulatus (strain G186AR / H82 / ATCC MYA-2454 / RMSCC 2432) (Darling's disease fungus).